A 379-amino-acid chain; its full sequence is Probable homogentisate phytyltransferase 2, chloroplastic (379 aa).

A disordered region spans residues 1–39 (MASLASPPLPCRAAATASRSGRPAPRLLGPPPPPASPLL). The N-terminal 65 residues, 1-65 (MASLASPPLP…WSRRDAVRVC (65 aa)), are a transit peptide targeting the chloroplast. Transmembrane regions (helical) follow at residues 121–141 (WLVF…GYIV), 174–194 (LVVL…GPFI), 195–215 (TSLY…PFRL), 220–240 (VAAF…GVYY), 252–272 (WSSP…VIAI), 299–319 (IAFL…AVAF), 328–348 (TVMV…TWVL), and 361–378 (YYRF…FFPL).

This sequence belongs to the UbiA prenyltransferase family.

Its subcellular location is the plastid. The protein localises to the chloroplast thylakoid membrane. It carries out the reaction phytyl diphosphate + homogentisate + H(+) = 2-methyl-6-phytyl-1,4-benzene-1,4-diol + CO2 + diphosphate. It participates in cofactor biosynthesis; tocopherol biosynthesis. Functionally, involved in the synthesis of tocopherol (vitamin E). Catalyzes the condensation of homogentisate and phytyl diphosphate to form dimethylphytylhydrquinone. The chain is Probable homogentisate phytyltransferase 2, chloroplastic (HPT2) from Oryza sativa subsp. japonica (Rice).